We begin with the raw amino-acid sequence, 132 residues long: Agouti-signaling protein (132 aa).

The signal sequence occupies residues 1–22 (MDVTRLLLATLLVFLCFFTACS). N-linked (GlcNAc...) asparagine glycosylation is present at N39. A disordered region spans residues 61–87 (QISRKEAEKKRSSKKEASMKKVARPRT). A compositionally biased stretch (basic and acidic residues) spans 63-79 (SRKEAEKKRSSKKEASM). Intrachain disulfides connect C93/C108, C100/C114, C107/C125, C111/C132, and C116/C123. The 40-residue stretch at 93-132 (CVATRDSCKPPAPACCDPCASCQCRFFRSACSCRVLSLNC) folds into the Agouti domain.

The protein localises to the secreted. Its function is as follows. Involved in the regulation of melanogenesis. The binding of ASP to MC1R precludes alpha-MSH initiated signaling and thus blocks production of cAMP, leading to a down-regulation of eumelanogenesis (brown/black pigment) and thus increasing synthesis of pheomelanin (yellow/red pigment). The polypeptide is Agouti-signaling protein (ASIP) (Macaca nigrescens (Gorontalo macaque)).